The primary structure comprises 622 residues: MTNDVEMKSETEELPPFPTVHILQVVKDAQQQHGLRHGDYARYRKYCAAKLERMRKALKFTNSHNCQKKRKAKFVKKWLSVESVQNVQFLNFGIFESERRYAEAMIDKITLEDNPEKSRKKFSMINSLRKAVLHATNLEKIVQESERFDAPTKLEAQAYAAWMRGMCSFESRNWQKASESLKLAKTVYEKLAEATNNTTLSSIFKGRCREIQPQLRLCEFNIAESPGAVGTMTELMELRMQMGEGGDSSVDKLISEMRASATSAEVVTIEWGGAKSTVDDEKAKQVVQEWKQTEVELAQCQTPKEKMALFEKATADTRDAIDRISDIIRRKSSENADTTVLQSIKAYLEFLKMNGTASRYLAIIDNTKSEKKSKPQDLLRLYDSVIEIYKEVAEIPGADHDKNLIQAFEVKVEYYRAFRCFYMASSYSALHKYSEAAALFDRTVSRVQDAEGKLKKLKSSSFITNETQSSLNELRSEVESAKVTVRAARLASAAGDVKTDSELAKIIDKRPLLETVNEWRQWDVRNSLKDKKTIPVASLPPAFIPMPNKPIFFDLANFHLTMPNVDDRLEKLQKDRDATPKKAAKGSSAAAASSKTSNQEEEEQQGLTGMLSGWKKSFWGNK.

The interval 576–622 (RDATPKKAAKGSSAAAASSKTSNQEEEEQQGLTGMLSGWKKSFWGNK) is disordered. Residues 585 to 595 (KGSSAAAASSK) are compositionally biased toward low complexity.

Belongs to the SRP68 family. As to quaternary structure, heterodimer with srpa-72. Srpa-68/srpa-72 heterodimer formation is stabilized by the presence of 7SL RNA. Component of a signal recognition particle (SRP) complex that consists of a 7SL RNA molecule of 300 nucleotides and six protein subunits: srpa-72, srpa-68, SRP54, F37F2.2/SRP19, F25G6.8/SRP14 and ZK512.4/SRP9. Within the SRP complex, interacts (via C-terminus) with srpa-72 (via N-terminus).

It localises to the cytoplasm. It is found in the nucleus. The protein localises to the nucleolus. The protein resides in the endoplasmic reticulum. Its function is as follows. Component of the signal recognition particle (SRP) complex, a ribonucleoprotein complex that mediates the cotranslational targeting of secretory and membrane proteins to the endoplasmic reticulum (ER). The SRP complex interacts with the signal sequence in nascent secretory and membrane proteins and directs them to the membrane of the ER. The SRP complex targets the ribosome-nascent chain complex to the SRP receptor (SR), which is anchored in the ER, where SR compaction and GTPase rearrangement drive cotranslational protein translocation into the ER. Binds the signal recognition particle RNA (7SL RNA), srpa-72 binds to this complex subsequently. The SRP complex possibly participates in the elongation arrest function. The sequence is that of Signal recognition particle subunit SRP68 from Caenorhabditis elegans.